Reading from the N-terminus, the 291-residue chain is MKLTIATRKSKLAQVQTELIINVLKDKYGISSEKLLMETLGDKILDKSLADIGGKGLFIKDIERILLEDKADAAVHSMKDVPFEVPDMFEIAAVTLRVDVRDVFVSRDGTHFKDLKNGAVIGTSSNRRAAQLKMLRDDIKVVPIRGNVQTRIRKMGEEKLDGIILAAAGLKRLNMENIITDYFSVEEMIPAVGQGALGVEIKKENKNRDLFRKLDNKNSRMCVEAERSFMRTLNGDCHSTIGAYAEIVNGQMNVLGFYEIDGRRVKKDVSGNIEDYMSLGKTLAEKILEDK.

An S-(dipyrrolylmethanemethyl)cysteine modification is found at cysteine 237.

It belongs to the HMBS family. In terms of assembly, monomer. Dipyrromethane serves as cofactor.

The catalysed reaction is 4 porphobilinogen + H2O = hydroxymethylbilane + 4 NH4(+). The protein operates within porphyrin-containing compound metabolism; protoporphyrin-IX biosynthesis; coproporphyrinogen-III from 5-aminolevulinate: step 2/4. In terms of biological role, tetrapolymerization of the monopyrrole PBG into the hydroxymethylbilane pre-uroporphyrinogen in several discrete steps. The chain is Porphobilinogen deaminase from Clostridium acetobutylicum (strain ATCC 824 / DSM 792 / JCM 1419 / IAM 19013 / LMG 5710 / NBRC 13948 / NRRL B-527 / VKM B-1787 / 2291 / W).